A 188-amino-acid polypeptide reads, in one-letter code: Elongation factor P (188 aa).

K34 bears the N6-(3,6-diaminohexanoyl)-5-hydroxylysine mark.

It belongs to the elongation factor P family. Post-translationally, may be beta-lysylated on the epsilon-amino group of Lys-34 by the combined action of EpmA and EpmB, and then hydroxylated on the C5 position of the same residue by EpmC (if this protein is present). Lysylation is critical for the stimulatory effect of EF-P on peptide-bond formation. The lysylation moiety may extend toward the peptidyltransferase center and stabilize the terminal 3-CCA end of the tRNA. Hydroxylation of the C5 position on Lys-34 may allow additional potential stabilizing hydrogen-bond interactions with the P-tRNA.

The protein localises to the cytoplasm. It functions in the pathway protein biosynthesis; polypeptide chain elongation. Involved in peptide bond synthesis. Alleviates ribosome stalling that occurs when 3 or more consecutive Pro residues or the sequence PPG is present in a protein, possibly by augmenting the peptidyl transferase activity of the ribosome. Modification of Lys-34 is required for alleviation. The polypeptide is Elongation factor P (Xanthomonas campestris pv. campestris (strain B100)).